Consider the following 254-residue polypeptide: Chaperone protein PmfD (254 aa).

Positions 1 to 26 (MNSFSTLKTLFCGSLLALSLVNTTQA) are cleaved as a signal peptide.

The protein belongs to the periplasmic pilus chaperone family.

Its subcellular location is the periplasm. In terms of biological role, involved in the biogenesis of the PMF fimbria. This Proteus mirabilis (strain HI4320) protein is Chaperone protein PmfD (pmfD).